A 205-amino-acid polypeptide reads, in one-letter code: Large ribosomal subunit protein uL3 (205 aa).

This sequence belongs to the universal ribosomal protein uL3 family. As to quaternary structure, part of the 50S ribosomal subunit. Forms a cluster with proteins L14 and L19.

In terms of biological role, one of the primary rRNA binding proteins, it binds directly near the 3'-end of the 23S rRNA, where it nucleates assembly of the 50S subunit. The protein is Large ribosomal subunit protein uL3 of Porphyromonas gingivalis (strain ATCC 33277 / DSM 20709 / CIP 103683 / JCM 12257 / NCTC 11834 / 2561).